Consider the following 1516-residue polypeptide: Receptor-type tyrosine-protein phosphatase S (1516 aa).

Residues 1 to 28 form the signal peptide; the sequence is MRILPSPGMPALLSLVSLLSVLLMGCVA. Topologically, residues 29-854 are extracellular; that stretch reads ESPPVFIKKP…PQPIIDGEEG (826 aa). Ig-like C2-type domains follow at residues 32–122, 134–223, and 235–317; these read PVFI…AKLT, PNID…ANLY, and PRFS…AQIT. Cystine bridges form between C53/C106 and C155/C206. Positions 67–71 are important for binding to glycosaminoglycan chains; it reads KKGKK. 2 N-linked (GlcNAc...) asparagine glycosylation sites follow: N253 and N298. Residues C256 and C301 are joined by a disulfide bond. Fibronectin type-III domains follow at residues 324–414, 419–513, 517–606, and 608–692; these read APGT…TGEQ, APRN…TQQG, QPMN…TLQS, and LPKN…TAAN. The helical transmembrane segment at 855–875 threads the bilayer; that stretch reads LIWVIGPVLAVVFIICIVIAI. Topologically, residues 876–1516 are cytoplasmic; that stretch reads LLYKNKRKDS…YLGSFDHYAT (641 aa). 2 consecutive Tyrosine-protein phosphatase domains span residues 961–1216 and 1248–1507; these read LSQE…LLEA and MELE…ALEY. Catalysis depends on phosphocysteine intermediate residues C1157 and C1448.

The protein belongs to the protein-tyrosine phosphatase family. Receptor class 2A subfamily. Homodimer. Binding to large heparan sulfate proteoglycan structures promotes oligomerization. Binding to chondroitin sulfate proteoglycan does not lead to oligomerization. Interacts (via Ig-like domains) with NTRK1 and NTRK3, but does not form detectable complexes with NTRK2. Interacts (via extracellular domain) with the heparan sulfate proteoglycans AGRN and COL18A1. In terms of processing, a cleavage occurs, separating the extracellular domain from the transmembrane segment. This process called 'ectodomain shedding' is thought to be involved in receptor desensitization, signal transduction and/or membrane localization. As to expression, detected in embryonic brain, dorsal root ganglion and spinal cord. Detected in embryonic retina (at protein level). Detected in embryonic brain, spinal cord, dorsal root ganglion, trigeminal ganglion, ganglia associated with the precardinal vein and vagus nerve, the inner and outer nuclear layer of the retina, limb, breast muscle, heart, gut and lung.

It localises to the cell membrane. It is found in the cell projection. The protein resides in the axon. Its subcellular location is the perikaryon. The protein localises to the cytoplasmic vesicle. It localises to the secretory vesicle. It is found in the synaptic vesicle membrane. The protein resides in the synapse. Its subcellular location is the synaptosome. The protein localises to the postsynaptic density. It localises to the neuron projection. It is found in the growth cone. The catalysed reaction is O-phospho-L-tyrosyl-[protein] + H2O = L-tyrosyl-[protein] + phosphate. Its function is as follows. Cell surface receptor that binds to glycosaminoglycans, including chondroitin sulfate proteoglycans and heparan sulfate proteoglycans. Binding to chondroitin sulfate and heparan sulfate proteoglycans has opposite effects on PTPRS oligomerization and regulation of neurite outgrowth. Contributes to the inhibition of neurite and axonal outgrowth by chondroitin sulfate proteoglycans, also after nerve transection. Plays a role in stimulating neurite outgrowth in response to the heparan sulfate proteoglycan GPC2. Required for normal brain development, especially for normal development of the pituitary gland and the olfactory bulb. Functions as tyrosine phosphatase. Mediates dephosphorylation of NTRK1, NTRK2 and NTRK3. Plays a role in down-regulation of signaling cascades that lead to the activation of Akt and MAP kinases. Down-regulates TLR9-mediated activation of NF-kappa-B, as well as production of TNF, interferon alpha and interferon beta. The chain is Receptor-type tyrosine-protein phosphatase S (PTPRS) from Gallus gallus (Chicken).